Reading from the N-terminus, the 211-residue chain is Acyl-homoserine-lactone synthase (211 aa).

This sequence belongs to the autoinducer synthase family.

It catalyses the reaction a fatty acyl-[ACP] + S-adenosyl-L-methionine = an N-acyl-L-homoserine lactone + S-methyl-5'-thioadenosine + holo-[ACP] + H(+). In terms of biological role, required for the synthesis of OHHL (N-(3-oxohexanoyl)-L-homoserine lactone), an autoinducer molecule which binds to TraR and thus acts in the control of conjugal transfer. The polypeptide is Acyl-homoserine-lactone synthase (traI) (Agrobacterium fabrum (strain C58 / ATCC 33970) (Agrobacterium tumefaciens (strain C58))).